We begin with the raw amino-acid sequence, 207 residues long: Holliday junction branch migration complex subunit RuvA (207 aa).

A domain I region spans residues 1–63 (MIDSLHGEVL…DDGIDLYAFE (63 aa)). Positions 64–142 (SDEARQMFAM…VFDSGDSASE (79 aa)) are domain II. The tract at residues 143 to 154 (PQSGVGGNSEAE) is flexible linker. The interval 155 to 207 (VDSGVVGTVTQALVELGFPEKQAEKTATSAAAEGGSVSEILKRALRSMSSERN) is domain III.

This sequence belongs to the RuvA family. As to quaternary structure, homotetramer. Forms an RuvA(8)-RuvB(12)-Holliday junction (HJ) complex. HJ DNA is sandwiched between 2 RuvA tetramers; dsDNA enters through RuvA and exits via RuvB. An RuvB hexamer assembles on each DNA strand where it exits the tetramer. Each RuvB hexamer is contacted by two RuvA subunits (via domain III) on 2 adjacent RuvB subunits; this complex drives branch migration. In the full resolvosome a probable DNA-RuvA(4)-RuvB(12)-RuvC(2) complex forms which resolves the HJ.

The protein localises to the cytoplasm. In terms of biological role, the RuvA-RuvB-RuvC complex processes Holliday junction (HJ) DNA during genetic recombination and DNA repair, while the RuvA-RuvB complex plays an important role in the rescue of blocked DNA replication forks via replication fork reversal (RFR). RuvA specifically binds to HJ cruciform DNA, conferring on it an open structure. The RuvB hexamer acts as an ATP-dependent pump, pulling dsDNA into and through the RuvAB complex. HJ branch migration allows RuvC to scan DNA until it finds its consensus sequence, where it cleaves and resolves the cruciform DNA. The sequence is that of Holliday junction branch migration complex subunit RuvA from Corynebacterium kroppenstedtii (strain DSM 44385 / JCM 11950 / CIP 105744 / CCUG 35717).